The following is a 387-amino-acid chain: O-phospho-L-seryl-tRNA:Cys-tRNA synthase 2 (387 aa).

Pyridoxal 5'-phosphate is bound by residues Ala-89–Arg-90, Asn-196, and Ser-219–His-221. At Lys-222 the chain carries N6-(pyridoxal phosphate)lysine.

The protein belongs to the SepCysS family. Homodimer. Interacts with SepRS. Pyridoxal 5'-phosphate serves as cofactor.

The catalysed reaction is O-phospho-L-seryl-tRNA(Cys) + hydrogen sulfide + H(+) = L-cysteinyl-tRNA(Cys) + phosphate. In terms of biological role, converts O-phospho-L-seryl-tRNA(Cys) (Sep-tRNA(Cys)) to L-cysteinyl-tRNA(Cys) (Cys-tRNA(Cys)). This is O-phospho-L-seryl-tRNA:Cys-tRNA synthase 2 from Methanococcoides burtonii (strain DSM 6242 / NBRC 107633 / OCM 468 / ACE-M).